The following is a 339-amino-acid chain: Annexin A2 (339 aa).

Serine 2 carries the N-acetylserine modification. Residues 2–24 are S100A10-binding site; it reads STVHEILCKLSLEGDHSTPPSAY. At tyrosine 24 the chain carries Phosphotyrosine; by SRC. The residue at position 26 (serine 26) is a Phosphoserine; by PKC. Annexin repeat units lie at residues 33 to 104 and 105 to 176; these read FDAE…GLLK and TPAQ…ALAK. N6-acetyllysine; alternate is present on lysine 49. A Glycyl lysine isopeptide (Lys-Gly) (interchain with G-Cter in SUMO1); alternate cross-link involves residue lysine 49. Residue lysine 49 forms a Glycyl lysine isopeptide (Lys-Gly) (interchain with G-Cter in SUMO2); alternate linkage. Lysine 152 carries the N6-acetyllysine modification. Serine 184 carries the post-translational modification Phosphoserine. Annexin repeat units lie at residues 189–261 and 265–336; these read ELID…NLVQ and NKPL…YLCG. Position 199 is a phosphotyrosine (tyrosine 199). Lysine 227 is subject to N6-acetyllysine.

Belongs to the annexin family. Heterotetramer containing 2 light chains of S100A10/p11 and 2 heavy chains of ANXA2/p36. Interacts with ATP1B1. Interacts with DYSF. Interacts with COCH. Interacts (via repeat Annexin 1) with PCSK9 (via the C-terminal domain); the interaction inhibits the degradation of LDLR. Interacts with CEACAM1 (via the cytoplasmic domain); this interaction is regulated by phosphorylation of CEACAM1. Interacts with APPL2 and APPL1; targets APPL2 to endosomes and acting in parallel to RAB5A. Interacts with S100A4. May interact with UBAP2. Interacts with PLEKHG4B; this interaction is required for PLEKHG4B localization to cell-cell adhesions. Interacts with FAM13A. Interacts with salivary cystatin-L2 (via loop 2) from the tick Ixodes scapularis; the interaction results in reduced activation of mouse NLRC4 inflammasome formation upon Anaplasma phagocytophilum infection. In terms of processing, ISGylated.

The protein localises to the secreted. Its subcellular location is the extracellular space. The protein resides in the extracellular matrix. It localises to the basement membrane. It is found in the melanosome. The protein localises to the early endosome. Calcium-regulated membrane-binding protein whose affinity for calcium is greatly enhanced by anionic phospholipids. It binds two calcium ions with high affinity. May be involved in heat-stress response. Inhibits PCSK9-enhanced LDLR degradation, probably reduces PCSK9 protein levels via a translational mechanism but also competes with LDLR for binding with PCSK9. Binds to endosomes damaged by phagocytosis of particulate wear debris and participates in endosomal membrane stabilization, thereby limiting NLRP3 inflammasome activation. Required for endothelial cell surface plasmin generation and may support fibrinolytic surveillance and neoangiogenesis. Functionally, (Microbial infection) Regulates the formation of the NLRC4 inflammasome triggered by Anaplasma phagocytophilum infection. Its function is as follows. (Microbial infection) Protects against Klebsiella pneumoniae infection. Attenuates bacteria-induced pulmonary inflammation and promotes intro-abdominal pathogen clearance. Promotes anti-inflammatory responses by facilitating TLR4 internalization and translocation into early endosomal membranes; this leads to activation of TRAM-dependent endosomal signaling and release of anti-inflammatory cytokines. In terms of biological role, (Microbial infection) Promotes macrophage phagocytic efficiency towards Cryptococcus neoformans and ability to control fungal infection inside the cells. (Microbial infection) Contributes to protection against Pseudomonas aeruginosa infection by regulating autophagy via the AKT1-mTOR-ULK1/2 signaling pathway and activation of Rho GTPases via FAM13A-mediated mechanism. This chain is Annexin A2 (Anxa2), found in Mus musculus (Mouse).